The primary structure comprises 382 residues: Adenosine 3'-phospho 5'-phosphosulfate transporter 2 (382 aa).

The span at 1–10 (MSVSNRNGNG) shows a compositional bias: polar residues. Positions 1 to 33 (MSVSNRNGNGSEVIYVGDRSTNRPPRNAPSPDE) are disordered. 10 helical membrane-spanning segments follow: residues 56–76 (LCCA…ELIF), 83–103 (PYGW…GYVE), 121–141 (VLLA…LGYL), 144–164 (PTQV…SILI), 170–190 (GPLD…FTLA), 197–217 (NFNP…AAIG), 234–254 (VVIY…LLTG), 271–291 (FGYA…VLTL), 299–319 (LAAT…FVFF), and 323–343 (FTIN…LNVY).

The protein belongs to the nucleotide-sugar transporter family. SLC35B subfamily.

It is found in the golgi apparatus membrane. In terms of biological role, mediates the transport of adenosine 3'-phospho 5'-phosphosulfate (PAPS), from cytosol into Golgi. PAPS is a universal sulfuryl donor for sulfation events that take place in the Golgi. Essential for viability. Involved in glycosaminoglycan synthesis and the subsequent signaling. May be involved in hh and dpp signaling by controlling the sulfation of heparan sulfate (HS). The polypeptide is Adenosine 3'-phospho 5'-phosphosulfate transporter 2 (Aedes aegypti (Yellowfever mosquito)).